Consider the following 285-residue polypeptide: Chlorite dismutase (285 aa).

An N-terminal signal peptide occupies residues 1-38; that stretch reads MKVRCVSLVAAGLLTIAGSAIGQPAPAPMPAMAPAAKP. A Ca(2+)-binding site is contributed by glutamate 105. Residue histidine 205 participates in heme binding. Catalysis depends on arginine 218, which acts as the Proton acceptor. Residues aspartate 227 and threonine 266 each contribute to the Ca(2+) site.

Belongs to the chlorite dismutase family. Homopentamer. Heme b serves as cofactor.

The protein resides in the periplasm. The catalysed reaction is chloride + O2 = chlorite. Functionally, catalyzes the heme-dependent decomposition of chlorite to O(2) and chloride with high efficiency and specificity. Used to detoxify chlorite, a by-product of the reduction of perchlorate, a primarily anthropogenic pollutant, in perchlorate-respiring bacteria. The polypeptide is Chlorite dismutase (cld) (Ideonella dechloratans).